The sequence spans 424 residues: uncharacterized protein (424 aa).

This sequence belongs to the serpin family.

This is an uncharacterized protein from Methanosarcina acetivorans (strain ATCC 35395 / DSM 2834 / JCM 12185 / C2A).